A 126-amino-acid chain; its full sequence is Histone H2B type 1-O (126 aa).

A compositionally biased stretch (low complexity) spans Met1–Lys12. Residues Met1 to Lys35 are disordered. Pro2 carries the post-translational modification N-acetylproline; partial. N6-(2-hydroxyisobutyryl)lysine; alternate is present on Lys6. Lys6 carries the post-translational modification N6-(beta-hydroxybutyryl)lysine; alternate. Residue Lys6 is modified to N6-acetyllysine; alternate. N6-butyryllysine; alternate is present on Lys6. At Lys6 the chain carries N6-crotonyllysine; alternate. Lys6 is modified (N6-lactoyllysine; alternate). A Glycyl lysine isopeptide (Lys-Gly) (interchain with G-Cter in SUMO2); alternate cross-link involves residue Lys6. Ser7 carries the ADP-ribosylserine modification. Lys12 carries the post-translational modification N6-(beta-hydroxybutyryl)lysine; alternate. Lys12 and Lys13 each carry N6-acetyllysine; alternate. N6-crotonyllysine; alternate is present on residues Lys12 and Lys13. Lys12 is subject to N6-lactoyllysine; alternate. Residue Lys13 is modified to N6-(2-hydroxyisobutyryl)lysine; alternate. Ser15 carries the phosphoserine; by STK4/MST1 modification. Residues Lys16, Lys17, Lys21, and Lys24 each carry the N6-acetyllysine; alternate modification. 4 positions are modified to N6-crotonyllysine; alternate: Lys16, Lys17, Lys21, and Lys24. N6-lactoyllysine; alternate occurs at positions 16, 17, 21, and 24. An N6-(beta-hydroxybutyryl)lysine; alternate mark is found at Lys17 and Lys21. An N6-glutaryllysine; alternate modification is found at Lys17. Lys21 and Lys24 each carry N6-(2-hydroxyisobutyryl)lysine; alternate. Lys21 carries the post-translational modification N6-butyryllysine; alternate. Lys21 is covalently cross-linked (Glycyl lysine isopeptide (Lys-Gly) (interchain with G-Cter in SUMO2); alternate). N6-(2-hydroxyisobutyryl)lysine is present on Lys25. Lys35 carries the N6-(2-hydroxyisobutyryl)lysine; alternate modification. Position 35 is an N6-(beta-hydroxybutyryl)lysine; alternate (Lys35). Position 35 is an N6-crotonyllysine; alternate (Lys35). Lys35 is modified (N6-glutaryllysine; alternate). Lys35 is subject to N6-succinyllysine; alternate. Lys35 participates in a covalent cross-link: Glycyl lysine isopeptide (Lys-Gly) (interchain with G-Cter in ubiquitin); alternate. Glu36 carries the post-translational modification PolyADP-ribosyl glutamic acid. Phosphoserine; by AMPK is present on Ser37. 3 positions are modified to N6-(2-hydroxyisobutyryl)lysine; alternate: Lys44, Lys47, and Lys58. Position 44 is an N6-lactoyllysine; alternate (Lys44). N6-glutaryllysine; alternate occurs at positions 44 and 47. N6-methyllysine; alternate is present on Lys47. Lys58 carries the post-translational modification N6,N6-dimethyllysine; alternate. Arg80 is modified (dimethylated arginine). Lys86 bears the N6-(2-hydroxyisobutyryl)lysine; alternate mark. Lys86 carries the post-translational modification N6-(beta-hydroxybutyryl)lysine; alternate. Residue Lys86 is modified to N6-acetyllysine; alternate. Lys86 carries the N6-lactoyllysine; alternate modification. At Lys86 the chain carries N6,N6,N6-trimethyllysine; alternate. Omega-N-methylarginine is present on residues Arg87 and Arg93. Residue Lys109 is modified to N6-(2-hydroxyisobutyryl)lysine; alternate. Lys109 carries the post-translational modification N6-lactoyllysine; alternate. At Lys109 the chain carries N6-glutaryllysine; alternate. N6-methyllysine; alternate is present on Lys109. Ser113 is a glycosylation site (O-linked (GlcNAc) serine). Thr116 bears the Phosphothreonine mark. An N6-(2-hydroxyisobutyryl)lysine; alternate mark is found at Lys117 and Lys121. Lys117 and Lys121 each carry N6-(beta-hydroxybutyryl)lysine; alternate. Lys117 and Lys121 each carry N6-lactoyllysine; alternate. Residues Lys117 and Lys121 each carry the N6-glutaryllysine; alternate modification. Lys117 and Lys121 each carry N6-succinyllysine; alternate. Lys117 carries the N6-malonyllysine; alternate modification. The residue at position 117 (Lys117) is an N6-methylated lysine; alternate. Residue Lys121 forms a Glycyl lysine isopeptide (Lys-Gly) (interchain with G-Cter in ubiquitin); alternate linkage.

It belongs to the histone H2B family. The nucleosome is a histone octamer containing two molecules each of H2A, H2B, H3 and H4 assembled in one H3-H4 heterotetramer and two H2A-H2B heterodimers. The octamer wraps approximately 147 bp of DNA. Post-translationally, monoubiquitination at Lys-35 (H2BK34Ub) by the MSL1/MSL2 dimer is required for histone H3 'Lys-4' (H3K4me) and 'Lys-79' (H3K79me) methylation and transcription activation at specific gene loci, such as HOXA9 and MEIS1 loci. Similarly, monoubiquitination at Lys-121 (H2BK120Ub) by the RNF20/40 complex gives a specific tag for epigenetic transcriptional activation and is also prerequisite for histone H3 'Lys-4' and 'Lys-79' methylation. It also functions cooperatively with the FACT dimer to stimulate elongation by RNA polymerase II. H2BK120Ub also acts as a regulator of mRNA splicing: deubiquitination by USP49 is required for efficient cotranscriptional splicing of a large set of exons. In terms of processing, phosphorylation at Ser-37 (H2BS36ph) by AMPK in response to stress promotes transcription. Phosphorylated on Ser-15 (H2BS14ph) by STK4/MST1 during apoptosis; which facilitates apoptotic chromatin condensation. Also phosphorylated on Ser-15 in response to DNA double strand breaks (DSBs), and in correlation with somatic hypermutation and immunoglobulin class-switch recombination. GlcNAcylation at Ser-113 promotes monoubiquitination of Lys-121. It fluctuates in response to extracellular glucose, and associates with transcribed genes. Post-translationally, ADP-ribosylated by PARP1 or PARP2 on Ser-7 (H2BS6ADPr) in response to DNA damage. H2BS6ADPr promotes recruitment of CHD1L. Poly ADP-ribosylation on Glu-36 (H2BE35ADPr) by PARP1 regulates adipogenesis: it inhibits phosphorylation at Ser-37 (H2BS36ph), thereby blocking expression of pro-adipogenetic genes. In terms of processing, crotonylation (Kcr) is specifically present in male germ cells and marks testis-specific genes in post-meiotic cells, including X-linked genes that escape sex chromosome inactivation in haploid cells. Crotonylation marks active promoters and enhancers and confers resistance to transcriptional repressors. It is also associated with post-meiotically activated genes on autosomes. Lactylated in macrophages by EP300/P300 by using lactoyl-CoA directly derived from endogenous or exogenous lactate, leading to stimulates gene transcription.

Its subcellular location is the nucleus. It is found in the chromosome. Functionally, core component of nucleosome. Nucleosomes wrap and compact DNA into chromatin, limiting DNA accessibility to the cellular machineries which require DNA as a template. Histones thereby play a central role in transcription regulation, DNA repair, DNA replication and chromosomal stability. DNA accessibility is regulated via a complex set of post-translational modifications of histones, also called histone code, and nucleosome remodeling. The chain is Histone H2B type 1-O from Homo sapiens (Human).